The following is a 444-amino-acid chain: MIASPWHERRLNEDKKRRNDHRSPFQRDRARILHSAAFRRLQAKTQVLGVGMNDFYRTRLTHSLEVSQIGTGIRAQLKLKQPQHLPLFDSMSLIESLCLAHDIGHPPFGHGGEVALNYMMRNHGGFEGNGQTFRILTGLEPYTECFGMNLCRRTLLGVLKYPGLYSSLHHNSQQAEVNNIRQLKPADWPPVKGVFDDDKAILDWVLAPLIDSDRERFLQTHTAATGKHKRTRYKSLDCSIMELADDIAYAVHDLEDAIVMGIVSSFQWHSDVTETLKNSKDSWIREEFATIGDKLFSHHHHQRKDAIGTLVNGFVTAIDLKEDLAFTEPLLRFNAALDDEFDSALEVLKQFVYKFVIRKPEIQMLEYKGQQTVMELFEAFESDPERLLPTHTQERWRESHNKGLNCHRVIADYISGMTDEFAARLHQQLFSPKLGSMIELSHEL.

Residues 1 to 26 (MIASPWHERRLNEDKKRRNDHRSPFQ) form a disordered region. The 192-residue stretch at 59 to 250 (RLTHSLEVSQ…MELADDIAYA (192 aa)) folds into the HD domain.

Belongs to the dGTPase family. Type 2 subfamily.

In Shewanella woodyi (strain ATCC 51908 / MS32), this protein is Deoxyguanosinetriphosphate triphosphohydrolase-like protein.